The following is a 313-amino-acid chain: Phosphoenolpyruvate phosphomutase (313 aa).

The active-site Nucleophile is Asp69.

It belongs to the isocitrate lyase/PEP mutase superfamily. PEP mutase family.

The catalysed reaction is phosphoenolpyruvate + H(+) = 3-phosphonopyruvate. The protein operates within secondary metabolite biosynthesis; bialaphos biosynthesis. Functionally, formation of a carbon-phosphorus bond by converting phosphoenolpyruvate (PEP) to phosphonopyruvate (P-Pyr). This is Phosphoenolpyruvate phosphomutase (bcpB) from Streptomyces hygroscopicus.